Here is a 212-residue protein sequence, read N- to C-terminus: Small ribosomal subunit protein eS6 (212 aa).

It belongs to the eukaryotic ribosomal protein eS6 family.

In Metallosphaera sedula (strain ATCC 51363 / DSM 5348 / JCM 9185 / NBRC 15509 / TH2), this protein is Small ribosomal subunit protein eS6.